The chain runs to 356 residues: tRNA-specific 2-thiouridylase MnmA (356 aa).

An ATP-binding site is contributed by 6–13 (AVSGGTDS). C95 serves as the catalytic Nucleophile. A disulfide bond links C95 and C195. G119 lines the ATP pocket. Residues 145–147 (KDQ) form an interaction with tRNA region. C195 serves as the catalytic Cysteine persulfide intermediate. Residues 300-301 (RY) form an interaction with tRNA region.

Belongs to the MnmA/TRMU family.

Its subcellular location is the cytoplasm. It catalyses the reaction S-sulfanyl-L-cysteinyl-[protein] + uridine(34) in tRNA + AH2 + ATP = 2-thiouridine(34) in tRNA + L-cysteinyl-[protein] + A + AMP + diphosphate + H(+). Its function is as follows. Catalyzes the 2-thiolation of uridine at the wobble position (U34) of tRNA, leading to the formation of s(2)U34. In Oleidesulfovibrio alaskensis (strain ATCC BAA-1058 / DSM 17464 / G20) (Desulfovibrio alaskensis), this protein is tRNA-specific 2-thiouridylase MnmA.